We begin with the raw amino-acid sequence, 242 residues long: Putative S-adenosyl-L-methionine-dependent methyltransferase Mmcs_0580 (242 aa).

S-adenosyl-L-methionine contacts are provided by residues Asp104 and 134–135; that span reads DL.

This sequence belongs to the UPF0677 family.

Exhibits S-adenosyl-L-methionine-dependent methyltransferase activity. This Mycobacterium sp. (strain MCS) protein is Putative S-adenosyl-L-methionine-dependent methyltransferase Mmcs_0580.